Reading from the N-terminus, the 358-residue chain is Chorismate synthase (358 aa).

Position 47 (R47) interacts with NADP(+). FMN is bound by residues 124–126 (RSS), 240–241 (NA), G284, 299–303 (KPVAT), and R325.

Belongs to the chorismate synthase family. Homotetramer. FMNH2 is required as a cofactor.

It catalyses the reaction 5-O-(1-carboxyvinyl)-3-phosphoshikimate = chorismate + phosphate. Its pathway is metabolic intermediate biosynthesis; chorismate biosynthesis; chorismate from D-erythrose 4-phosphate and phosphoenolpyruvate: step 7/7. In terms of biological role, catalyzes the anti-1,4-elimination of the C-3 phosphate and the C-6 proR hydrogen from 5-enolpyruvylshikimate-3-phosphate (EPSP) to yield chorismate, which is the branch point compound that serves as the starting substrate for the three terminal pathways of aromatic amino acid biosynthesis. This reaction introduces a second double bond into the aromatic ring system. The chain is Chorismate synthase from Phocaeicola vulgatus (strain ATCC 8482 / DSM 1447 / JCM 5826 / CCUG 4940 / NBRC 14291 / NCTC 11154) (Bacteroides vulgatus).